Consider the following 876-residue polypeptide: Alanine--tRNA ligase (876 aa).

The Zn(2+) site is built by His-564, His-568, Cys-666, and His-670.

Belongs to the class-II aminoacyl-tRNA synthetase family. As to quaternary structure, homotetramer. Zn(2+) serves as cofactor.

The protein localises to the cytoplasm. The enzyme catalyses tRNA(Ala) + L-alanine + ATP = L-alanyl-tRNA(Ala) + AMP + diphosphate. Its function is as follows. Catalyzes the attachment of alanine to tRNA(Ala) in a two-step reaction: alanine is first activated by ATP to form Ala-AMP and then transferred to the acceptor end of tRNA(Ala). Also edits incorrectly charged Ser-tRNA(Ala) and Gly-tRNA(Ala) via its editing domain. This Salmonella paratyphi A (strain ATCC 9150 / SARB42) protein is Alanine--tRNA ligase.